A 432-amino-acid polypeptide reads, in one-letter code: Pachytene checkpoint protein 2 homolog (432 aa).

An ATP-binding site is contributed by 179 to 186; it reads GPPGTGKT.

The protein belongs to the AAA ATPase family. PCH2 subfamily.

Plays a key role in chromosome recombination and chromosome structure development during meiosis. Required at early steps in meiotic recombination that leads to non-crossovers pathways. Also needed for efficient completion of homologous synapsis by influencing crossover distribution along the chromosomes affecting both crossovers and non-crossovers pathways. The chain is Pachytene checkpoint protein 2 homolog (TRIP13) from Gallus gallus (Chicken).